The sequence spans 375 residues: Alcohol dehydrogenase 1B (375 aa).

Ser1 carries the N-acetylserine modification. Positions 46, 67, 97, 100, 103, 111, and 174 each coordinate Zn(2+). NAD(+) contacts are provided by residues 199–204 (GLGGVG), Asp223, Lys228, 293–295 (VGV), and Arg370.

This sequence belongs to the zinc-containing alcohol dehydrogenase family. Class-I subfamily. Multimeric (with different ratios of monomers). It depends on Zn(2+) as a cofactor.

It localises to the cytoplasm. The enzyme catalyses a primary alcohol + NAD(+) = an aldehyde + NADH + H(+). It catalyses the reaction a secondary alcohol + NAD(+) = a ketone + NADH + H(+). The chain is Alcohol dehydrogenase 1B from Saara hardwickii (Indian spiny-tailed lizard).